The sequence spans 534 residues: CTP synthase (534 aa).

The interval 1–267 (MSKYIVVTGG…GSYILNRLNI (267 aa)) is amidoligase domain. S13 is a CTP binding site. Position 13 (S13) interacts with UTP. An ATP-binding site is contributed by 14–19 (SIGKGI). Position 54 (Y54) interacts with L-glutamine. D71 is a binding site for ATP. Mg(2+) is bound by residues D71 and E141. CTP-binding positions include 148-150 (DIE), 188-193 (KTKPTQ), and K224. UTP is bound by residues 188–193 (KTKPTQ) and K224. The region spanning 294–532 (KIAVVGKYIE…IKAAKNKKQN (239 aa)) is the Glutamine amidotransferase type-1 domain. Residue G353 coordinates L-glutamine. The active-site Nucleophile; for glutamine hydrolysis is the C380. L-glutamine contacts are provided by residues 381–384 (LGLH), E403, and R460. Catalysis depends on residues H505 and E507.

This sequence belongs to the CTP synthase family. As to quaternary structure, homotetramer.

The enzyme catalyses UTP + L-glutamine + ATP + H2O = CTP + L-glutamate + ADP + phosphate + 2 H(+). The catalysed reaction is L-glutamine + H2O = L-glutamate + NH4(+). It carries out the reaction UTP + NH4(+) + ATP = CTP + ADP + phosphate + 2 H(+). The protein operates within pyrimidine metabolism; CTP biosynthesis via de novo pathway; CTP from UDP: step 2/2. Its activity is regulated as follows. Allosterically activated by GTP, when glutamine is the substrate; GTP has no effect on the reaction when ammonia is the substrate. The allosteric effector GTP functions by stabilizing the protein conformation that binds the tetrahedral intermediate(s) formed during glutamine hydrolysis. Inhibited by the product CTP, via allosteric rather than competitive inhibition. In terms of biological role, catalyzes the ATP-dependent amination of UTP to CTP with either L-glutamine or ammonia as the source of nitrogen. Regulates intracellular CTP levels through interactions with the four ribonucleotide triphosphates. This chain is CTP synthase, found in Methanosphaera stadtmanae (strain ATCC 43021 / DSM 3091 / JCM 11832 / MCB-3).